The primary structure comprises 1266 residues: Neuronal-glial cell adhesion molecule (1266 aa).

The signal sequence occupies residues 1 to 20 (MALPMVGLLLLLLLGGPGAA). The Extracellular portion of the chain corresponds to 21–1130 (ITIPPEYGAH…PQPGGGVCTK (1110 aa)). 6 consecutive Ig-like C2-type domains span residues 36–128 (PELT…NVIA), 135–221 (PKEK…KEPL), 236–322 (PRLL…HSVT), 327–413 (PYWV…AFLH), 418–506 (PLRM…ALLE), and 510–597 (PTRI…AQLR). 4 disulfides stabilise this stretch: Cys-58/Cys-110, Cys-154/Cys-205, Cys-260/Cys-306, and Cys-348/Cys-397. N-linked (GlcNAc...) asparagine glycosylation occurs at Asn-97. 5 N-linked (GlcNAc...) asparagine glycosylation sites follow: Asn-288, Asn-390, Asn-434, Asn-472, and Asn-498. Cys-441 and Cys-490 are disulfide-bonded. An intrachain disulfide couples Cys-532 to Cys-581. 5 Fibronectin type-III domains span residues 603–698 (PSRD…TPPA), 700–804 (PERN…SGED), 809–930 (YPEN…TPEG), 934–1021 (PPEE…TKPE), and 1022–1118 (PPSP…TNGT). Residues 685-710 (EHHAPSAPIETPPAAPERNPGGVHGE) form a disordered region. 2 N-linked (GlcNAc...) asparagine glycosylation sites follow: Asn-712 and Asn-819. The segment at 857–882 (SRRQAPPDPPQIPQSPAEDPPPFPPV) is disordered. The segment covering 862–881 (PPDPPQIPQSPAEDPPPFPP) has biased composition (pro residues). A Cell attachment site motif is present at residues 914–916 (RGD). The interval 1004-1025 (STPRERPALQTVGSTKPEPPSP) is disordered. 4 N-linked (GlcNAc...) asparagine glycosylation sites follow: Asn-1061, Asn-1075, Asn-1100, and Asn-1116. A helical membrane pass occupies residues 1131 to 1153 (GWFIGFVSSVVLLLLILLILCFI). The Cytoplasmic portion of the chain corresponds to 1154 to 1266 (KRSKGGKYSV…ASPCAGPPLD (113 aa)). The segment covering 1163 to 1195 (VKDKEDTQVDSEARPMKDETFGEYRSLESEAEK) has biased composition (basic and acidic residues). The tract at residues 1163 to 1266 (VKDKEDTQVD…ASPCAGPPLD (104 aa)) is disordered. Residues 1199–1211 (SGSGAGSGVGSPG) are compositionally biased toward gly residues.

The protein belongs to the immunoglobulin superfamily. L1/neurofascin/NgCAM family. Binds to itself and to axonin 1. As to expression, brain.

It localises to the cell membrane. Its function is as follows. Mediates the adhesion of neurons to neurons and neurons to glia. It is involved in neuronal migration, neurite fasciculation and outgrowth. The polypeptide is Neuronal-glial cell adhesion molecule (Gallus gallus (Chicken)).